We begin with the raw amino-acid sequence, 1425 residues long: Neuropathy target esterase sws (1425 aa).

The Lumenal segment spans residues 1–34 (MDVLEMLRASASGSYNTIFSDAWCQYVSKQITAT). Residues 35–55 (VYMYFALVMMSLLFIAWFLYF) traverse the membrane as a helical segment. At 56 to 1425 (KRMARLRLRD…RSSPNNETKN (1370 aa)) the chain is on the cytoplasmic side. Residue 174–301 (IFGHFEKPVF…IRVIQVIMIR (128 aa)) participates in a nucleoside 3',5'-cyclic phosphate binding. Polar residues-rich tracts occupy residues 332-348 (TMSG…SRQA) and 357-366 (SQMNLMQSAV). Positions 332-410 (TMSGPINSQT…NPDGSFHGTT (79 aa)) are disordered. The segment covering 367–381 (SGTGSSGVSVTVTRP) has biased composition (low complexity). A phosphoserine mark is found at Ser-444 and Ser-453. A nucleoside 3',5'-cyclic phosphate-binding positions include 482-609 (ELGL…VVRR) and 598-727 (IVLD…HRFL). The PNPLA domain maps to 952 to 1118 (LVLGGGGARG…VNNLPADVMH (167 aa)). Positions 956–961 (GGGARG) match the GXGXXG motif. Residues 983–987 (GVSIG) carry the GXSXG motif. The Nucleophile role is filled by Ser-985. Asp-1105 serves as the catalytic Proton acceptor. The DGA/G signature appears at 1105–1107 (DGG). Ser-1160 carries the post-translational modification Phosphoserine. The interval 1330-1425 (LERKTDKSTQ…RSSPNNETKN (96 aa)) is disordered. The span at 1337–1347 (STQSSPPSNSR) shows a compositional bias: low complexity. Residues 1348 to 1358 (SDMRGKEEARH) show a composition bias toward basic and acidic residues. Low complexity predominate over residues 1380–1403 (TKTQTGQEQELQQEQQDQGATAEQ). Residues 1404–1416 (LVDKDKEENKENR) show a composition bias toward basic and acidic residues.

It belongs to the NTE family. Interacts with Pka-C3; interaction inhibits the catalytic function of Pka-C3 and the esterase activity of sws. Isoform A and isoform B are expressed in the entire brain cortex; cortical cell bodies of adult brain. Sws and Pka-C3 are colocalized in all neurons.

It localises to the endoplasmic reticulum membrane. It catalyses the reaction a 1-acyl-sn-glycero-3-phosphocholine + H2O = sn-glycerol 3-phosphocholine + a fatty acid + H(+). In terms of biological role, phospholipase B that deacylates intracellular phosphatidylcholine (PtdCho), generating glycerophosphocholine (GroPtdCho). This deacylation occurs at both sn-2 and sn-1 positions of PtdCho. Its specific chemical modification by certain organophosphorus (OP) compounds leads to distal axonopathy. Plays a role in the signaling mechanism between neurons and glia that regulates glia wrapping during development of the adult brain. Essential for membrane lipid homeostasis and cell survival in both neurons and glia of the adult brain. In Drosophila melanogaster (Fruit fly), this protein is Neuropathy target esterase sws (sws).